A 212-amino-acid chain; its full sequence is Thymidylate kinase (212 aa).

Gly-11–Thr-18 contacts ATP.

It belongs to the thymidylate kinase family.

The enzyme catalyses dTMP + ATP = dTDP + ADP. In terms of biological role, phosphorylation of dTMP to form dTDP in both de novo and salvage pathways of dTTP synthesis. In Buchnera aphidicola subsp. Acyrthosiphon pisum (strain APS) (Acyrthosiphon pisum symbiotic bacterium), this protein is Thymidylate kinase (tmk).